We begin with the raw amino-acid sequence, 475 residues long: Ammonium transporter 2 (475 aa).

The next 11 membrane-spanning stretches (helical) occupy residues 27–47, 55–75, 120–140, 148–168, 183–203, 218–238, 254–274, 279–299, 302–322, 336–356, and 389–409; these read AATL…ASIV, SAFM…LLCY, LVYF…GSVL, WMAF…YSIW, GGYV…YWVG, VLLM…FNGG, TNLS…IFFG, IGAI…AGLI, WAAI…MMII, LAVF…TGLF, and AGAA…LLAI.

This sequence belongs to the ammonia transporter channel (TC 1.A.11.2) family. In terms of tissue distribution, higher expression in shoots than roots.

The protein localises to the cell membrane. In terms of biological role, high affinity ammonium transporter that may play an important role in moving ammonium between the apoplast and symplast of cells throughout the plant. Does not transport methylammonium. The chain is Ammonium transporter 2 (AMT2) from Arabidopsis thaliana (Mouse-ear cress).